The sequence spans 204 residues: NADH-quinone oxidoreductase subunit C (204 aa).

The protein belongs to the complex I 30 kDa subunit family. As to quaternary structure, NDH-1 is composed of 14 different subunits. Subunits NuoB, C, D, E, F, and G constitute the peripheral sector of the complex.

The protein resides in the cell inner membrane. The enzyme catalyses a quinone + NADH + 5 H(+)(in) = a quinol + NAD(+) + 4 H(+)(out). Its function is as follows. NDH-1 shuttles electrons from NADH, via FMN and iron-sulfur (Fe-S) centers, to quinones in the respiratory chain. The immediate electron acceptor for the enzyme in this species is believed to be ubiquinone. Couples the redox reaction to proton translocation (for every two electrons transferred, four hydrogen ions are translocated across the cytoplasmic membrane), and thus conserves the redox energy in a proton gradient. In Vesicomyosocius okutanii subsp. Calyptogena okutanii (strain HA), this protein is NADH-quinone oxidoreductase subunit C.